The primary structure comprises 729 residues: Fatty acid oxidation complex subunit alpha (729 aa).

Residues 1-189 (MLYQSETLQL…KVGLVDAVVA (189 aa)) form an enoyl-CoA hydratase/isomerase region. Residue D296 coordinates substrate. Residues 311–729 (SAPKQAAVLG…LLDVSISQPA (419 aa)) are 3-hydroxyacyl-CoA dehydrogenase. NAD(+) is bound by residues M324, D343, 400-402 (VVE), K407, and S429. The For 3-hydroxyacyl-CoA dehydrogenase activity role is filled by H450. Residue N453 participates in NAD(+) binding. The substrate site is built by N500 and Y660.

It in the N-terminal section; belongs to the enoyl-CoA hydratase/isomerase family. This sequence in the C-terminal section; belongs to the 3-hydroxyacyl-CoA dehydrogenase family. Heterotetramer of two alpha chains (FadB) and two beta chains (FadA).

It catalyses the reaction a (3S)-3-hydroxyacyl-CoA + NAD(+) = a 3-oxoacyl-CoA + NADH + H(+). The catalysed reaction is a (3S)-3-hydroxyacyl-CoA = a (2E)-enoyl-CoA + H2O. The enzyme catalyses a 4-saturated-(3S)-3-hydroxyacyl-CoA = a (3E)-enoyl-CoA + H2O. It carries out the reaction (3S)-3-hydroxybutanoyl-CoA = (3R)-3-hydroxybutanoyl-CoA. It catalyses the reaction a (3Z)-enoyl-CoA = a 4-saturated (2E)-enoyl-CoA. The catalysed reaction is a (3E)-enoyl-CoA = a 4-saturated (2E)-enoyl-CoA. Its pathway is lipid metabolism; fatty acid beta-oxidation. In terms of biological role, involved in the aerobic and anaerobic degradation of long-chain fatty acids via beta-oxidation cycle. Catalyzes the formation of 3-oxoacyl-CoA from enoyl-CoA via L-3-hydroxyacyl-CoA. It can also use D-3-hydroxyacyl-CoA and cis-3-enoyl-CoA as substrate. The sequence is that of Fatty acid oxidation complex subunit alpha from Yersinia enterocolitica serotype O:8 / biotype 1B (strain NCTC 13174 / 8081).